A 487-amino-acid chain; its full sequence is Glycogen synthase (487 aa).

Lysine 15 contributes to the ADP-alpha-D-glucose binding site.

Belongs to the glycosyltransferase 1 family. Bacterial/plant glycogen synthase subfamily.

It catalyses the reaction [(1-&gt;4)-alpha-D-glucosyl](n) + ADP-alpha-D-glucose = [(1-&gt;4)-alpha-D-glucosyl](n+1) + ADP + H(+). It participates in glycan biosynthesis; glycogen biosynthesis. Functionally, synthesizes alpha-1,4-glucan chains using ADP-glucose. This Leptothrix cholodnii (strain ATCC 51168 / LMG 8142 / SP-6) (Leptothrix discophora (strain SP-6)) protein is Glycogen synthase.